A 376-amino-acid chain; its full sequence is Copper-containing nitrite reductase (376 aa).

Residues 1–33 (MSEQFQMTRRSMLAGAAIAGAVTPLIGAVSAHA) constitute a signal peptide (tat-type signal). 2 consecutive Plastocyanin-like domains span residues 98 to 193 (MTFN…IMVL) and 258 to 359 (GAVG…FAVT). His131, His136, His171, Cys172, His181, Met186, and His342 together coordinate Cu cation.

Belongs to the multicopper oxidase family. Homotrimer. Cu(2+) serves as cofactor. The cofactor is Cu(+). FAD is required as a cofactor. Post-translationally, predicted to be exported by the Tat system. The position of the signal peptide cleavage has not been experimentally proven.

Its subcellular location is the periplasm. The catalysed reaction is nitric oxide + Fe(III)-[cytochrome c] + H2O = Fe(II)-[cytochrome c] + nitrite + 2 H(+). It functions in the pathway nitrogen metabolism; nitrate reduction (denitrification); dinitrogen from nitrate: step 2/4. The polypeptide is Copper-containing nitrite reductase (nirK) (Rhizobium meliloti (strain 1021) (Ensifer meliloti)).